Reading from the N-terminus, the 308-residue chain is uncharacterized protein (308 aa).

The first 19 residues, 1 to 19 (MKLLLILILIINNYNLCLS), serve as a signal peptide directing secretion. N-linked (GlcNAc...) asparagine glycans are attached at residues Asn-25 and Asn-300.

The protein resides in the secreted. This is an uncharacterized protein from Dictyostelium discoideum (Social amoeba).